The sequence spans 557 residues: Ubiquitin C-terminal hydrolase 22 (557 aa).

Residues 36-130 (FRCFNDARIK…VSKQLFGLGM (95 aa)) form a UBP-type; degenerate zinc finger. Zn(2+)-binding residues include Cys-56, Cys-59, Cys-69, Cys-72, Cys-77, His-80, His-84, and His-91. Positions 177–531 (RGLNNLGSTC…ECYMLFYAQE (355 aa)) constitute a USP domain. Catalysis depends on Cys-186, which acts as the Nucleophile. The active-site Proton acceptor is His-491.

The protein belongs to the peptidase C19 family. As to quaternary structure, component of a deubiquitination module (DUB module) formed by ENY2, SGF11, and UBP22 in Arabidopsis. Interacts directly with SGF11, but not with ENY2.

Its subcellular location is the nucleus. The protein resides in the nucleoplasm. It catalyses the reaction Thiol-dependent hydrolysis of ester, thioester, amide, peptide and isopeptide bonds formed by the C-terminal Gly of ubiquitin (a 76-residue protein attached to proteins as an intracellular targeting signal).. Its function is as follows. Component of a deubiquitination module (DUB module) that specifically deubiquinates monoubiquinated histone H2B (H2Bub). Does not seem to be a component of the TREX-2 complex. Seems to act independently of the SAGA multiprotein complex. The DUB module is responsible for the major H2Bub deubiquitinase activity in Arabidopsis. This chain is Ubiquitin C-terminal hydrolase 22, found in Arabidopsis thaliana (Mouse-ear cress).